A 917-amino-acid polypeptide reads, in one-letter code: Outer membrane protein SlpA (917 aa).

Residues 1–23 form the signal peptide; the sequence is MKKRLVTLLAGLLTVLSMGFGLA. An SLH domain is found at 24–84; sequence QFSDVPAGHW…QQIEEELKTQ (61 aa).

Homotrimer.

The protein resides in the cell outer membrane. Its function is as follows. Plays an important role in the structural organization and integrity of the cell envelope, bridging the outer membrane to the peptidoglyan layer. Appears to be a nonselective channel. This chain is Outer membrane protein SlpA (slpA), found in Thermus thermophilus (strain ATCC 27634 / DSM 579 / HB8).